The chain runs to 282 residues: Elongation factor Ts (282 aa).

An involved in Mg(2+) ion dislocation from EF-Tu region spans residues 80-83 (TDFV).

The protein belongs to the EF-Ts family.

The protein localises to the cytoplasm. In terms of biological role, associates with the EF-Tu.GDP complex and induces the exchange of GDP to GTP. It remains bound to the aminoacyl-tRNA.EF-Tu.GTP complex up to the GTP hydrolysis stage on the ribosome. The chain is Elongation factor Ts from Protochlamydia amoebophila (strain UWE25).